The following is a 386-amino-acid chain: Inactive GDSL esterase/lipase-like protein 23 (386 aa).

The signal sequence occupies residues 1 to 29 (MMAKNCNLVSVLCVFLVLTLFNKPITVAG). Residue Ser43 is the Nucleophile of the active site. Asn105, Asn165, and Asn288 each carry an N-linked (GlcNAc...) asparagine glycan. Active-site residues include Asp322 and His325.

It belongs to the 'GDSL' lipolytic enzyme family. As to quaternary structure, part of the PYK10 complex. Interacts with MVP1. In terms of tissue distribution, expressed mainly in roots.

It is found in the endoplasmic reticulum. Its function is as follows. Involved in the control of the PYK10 complex size and possibly substrate specificity. May be exported from the endoplasmic reticulum upon interaction with MVP1. The protein is Inactive GDSL esterase/lipase-like protein 23 (GLL23) of Arabidopsis thaliana (Mouse-ear cress).